We begin with the raw amino-acid sequence, 477 residues long: MVLMQDKGSSQQWPGLGGEGGGTGPLSMLRAALLLISLPWGAQGTASTSLSTAGGHTVPPTGGRYLSIGDGSVMEFEFPEDSEGIIVISSQYPGQANRTAPGPMLRVTSLDTEVLTIKNVSAITWGGGGGFVVSIHSGLAGLAPLHIQLVDAHEAPPTLIEERRDFCIKVSPAEDTPATLSADLAHFSENPILYLLLPLIFVNKCSFGCKVELEVLKGLMQSPQPMLLGLLGQFLVMPLYAFLMAKVFMLPKALALGLIITCSSPGGGGSYLFSLLLGGDVTLAISMTFLSTVAATGFLPLSSAIYSRLLSIHETLHVPISKILGTLLFIAIPIAVGVLIKSKLPKFSQLLLQVVKPFSFVLLLGGLFLAYRMGVFILAGIRLPIVLVGITVPLVGLLVGYCLATCLKLPVAQRRTVSIEVGVQNSLLALAMLQLSLRRLQADYASQAPFIVALSGTSEMLALVIGHFIYSSLFPVP.

Residues 1–21 are disordered; sequence MVLMQDKGSSQQWPGLGGEGG. The next 8 membrane-spanning stretches (helical) occupy residues 225–245, 253–273, 281–301, 320–340, 361–381, 383–403, 417–437, and 450–470; these read PMLL…FLMA, ALAL…SYLF, VTLA…FLPL, ISKI…GVLI, VLLL…LAGI, LPIV…GYCL, VSIE…QLSL, and FIVA…HFIY.

The protein belongs to the bile acid:sodium symporter (BASS) (TC 2.A.28) family.

The protein localises to the membrane. Functionally, the ubiquitous expression and the conservation of the sequence in distant animal species suggest that the gene codes for a protein with housekeeping functions. The chain is P3 protein (SLC10A3) from Homo sapiens (Human).